We begin with the raw amino-acid sequence, 356 residues long: Histidinol-phosphate aminotransferase (356 aa).

Residue Lys214 is modified to N6-(pyridoxal phosphate)lysine.

This sequence belongs to the class-II pyridoxal-phosphate-dependent aminotransferase family. Histidinol-phosphate aminotransferase subfamily. In terms of assembly, homodimer. It depends on pyridoxal 5'-phosphate as a cofactor.

The enzyme catalyses L-histidinol phosphate + 2-oxoglutarate = 3-(imidazol-4-yl)-2-oxopropyl phosphate + L-glutamate. The protein operates within amino-acid biosynthesis; L-histidine biosynthesis; L-histidine from 5-phospho-alpha-D-ribose 1-diphosphate: step 7/9. The sequence is that of Histidinol-phosphate aminotransferase from Escherichia coli O9:H4 (strain HS).